A 420-amino-acid polypeptide reads, in one-letter code: UDP-N-acetylglucosamine 1-carboxyvinyltransferase (420 aa).

Residue 22–23 participates in phosphoenolpyruvate binding; sequence KN. Arg91 serves as a coordination point for UDP-N-acetyl-alpha-D-glucosamine. Cys115 (proton donor) is an active-site residue. Position 115 is a 2-(S-cysteinyl)pyruvic acid O-phosphothioketal (Cys115). UDP-N-acetyl-alpha-D-glucosamine contacts are provided by residues 120 to 124, 160 to 163, Asp305, and Ile327; these read RPVDL and KVSV.

It belongs to the EPSP synthase family. MurA subfamily.

The protein resides in the cytoplasm. The enzyme catalyses phosphoenolpyruvate + UDP-N-acetyl-alpha-D-glucosamine = UDP-N-acetyl-3-O-(1-carboxyvinyl)-alpha-D-glucosamine + phosphate. Its pathway is cell wall biogenesis; peptidoglycan biosynthesis. Its function is as follows. Cell wall formation. Adds enolpyruvyl to UDP-N-acetylglucosamine. This is UDP-N-acetylglucosamine 1-carboxyvinyltransferase from Pectobacterium atrosepticum (strain SCRI 1043 / ATCC BAA-672) (Erwinia carotovora subsp. atroseptica).